A 133-amino-acid polypeptide reads, in one-letter code: Small ribosomal subunit protein uS11 (133 aa).

The protein belongs to the universal ribosomal protein uS11 family. As to quaternary structure, part of the 30S ribosomal subunit. Interacts with proteins S7 and S18. Binds to IF-3.

Located on the platform of the 30S subunit, it bridges several disparate RNA helices of the 16S rRNA. Forms part of the Shine-Dalgarno cleft in the 70S ribosome. This is Small ribosomal subunit protein uS11 from Burkholderia pseudomallei (strain 1106a).